The primary structure comprises 443 residues: Probable D-serine dehydratase (443 aa).

Lys118 is subject to N6-(pyridoxal phosphate)lysine.

The protein belongs to the serine/threonine dehydratase family. DsdA subfamily. Pyridoxal 5'-phosphate is required as a cofactor.

It catalyses the reaction D-serine = pyruvate + NH4(+). The polypeptide is Probable D-serine dehydratase (Vibrio parahaemolyticus serotype O3:K6 (strain RIMD 2210633)).